A 133-amino-acid chain; its full sequence is Holo-[acyl-carrier-protein] synthase (133 aa).

Positions 8 and 57 each coordinate Mg(2+).

Belongs to the P-Pant transferase superfamily. AcpS family. It depends on Mg(2+) as a cofactor.

The protein localises to the cytoplasm. It catalyses the reaction apo-[ACP] + CoA = holo-[ACP] + adenosine 3',5'-bisphosphate + H(+). In terms of biological role, transfers the 4'-phosphopantetheine moiety from coenzyme A to a Ser of acyl-carrier-protein. This Caulobacter sp. (strain K31) protein is Holo-[acyl-carrier-protein] synthase.